Reading from the N-terminus, the 455-residue chain is Glutamate-1-semialdehyde 2,1-aminomutase (455 aa).

Lys-286 carries the post-translational modification N6-(pyridoxal phosphate)lysine.

This sequence belongs to the class-III pyridoxal-phosphate-dependent aminotransferase family. HemL subfamily. Homodimer. Pyridoxal 5'-phosphate serves as cofactor.

The protein resides in the cytoplasm. The enzyme catalyses (S)-4-amino-5-oxopentanoate = 5-aminolevulinate. It functions in the pathway porphyrin-containing compound metabolism; protoporphyrin-IX biosynthesis; 5-aminolevulinate from L-glutamyl-tRNA(Glu): step 2/2. The polypeptide is Glutamate-1-semialdehyde 2,1-aminomutase (Clavibacter michiganensis subsp. michiganensis (strain NCPPB 382)).